A 599-amino-acid chain; its full sequence is Proline--tRNA ligase (599 aa).

The protein belongs to the class-II aminoacyl-tRNA synthetase family. ProS type 1 subfamily. Homodimer.

Its subcellular location is the cytoplasm. It catalyses the reaction tRNA(Pro) + L-proline + ATP = L-prolyl-tRNA(Pro) + AMP + diphosphate. Its function is as follows. Catalyzes the attachment of proline to tRNA(Pro) in a two-step reaction: proline is first activated by ATP to form Pro-AMP and then transferred to the acceptor end of tRNA(Pro). As ProRS can inadvertently accommodate and process non-cognate amino acids such as alanine and cysteine, to avoid such errors it has two additional distinct editing activities against alanine. One activity is designated as 'pretransfer' editing and involves the tRNA(Pro)-independent hydrolysis of activated Ala-AMP. The other activity is designated 'posttransfer' editing and involves deacylation of mischarged Ala-tRNA(Pro). The misacylated Cys-tRNA(Pro) is not edited by ProRS. This chain is Proline--tRNA ligase, found in Prochlorococcus marinus (strain MIT 9303).